Consider the following 142-residue polypeptide: Translation initiation factor 2 subunit beta (142 aa).

It belongs to the eIF-2-beta/eIF-5 family. Heterotrimer composed of an alpha, a beta and a gamma chain.

Functionally, eIF-2 functions in the early steps of protein synthesis by forming a ternary complex with GTP and initiator tRNA. The sequence is that of Translation initiation factor 2 subunit beta from Methanosphaera stadtmanae (strain ATCC 43021 / DSM 3091 / JCM 11832 / MCB-3).